The following is a 370-amino-acid chain: GTPase Obg (370 aa).

The region spanning 1 to 159 (MKFIDEARIE…RKLKLELKVL (159 aa)) is the Obg domain. The tract at residues 129–148 (HFKSSTNRAPRQKTNGKSGE) is disordered. Positions 130–145 (FKSSTNRAPRQKTNGK) are enriched in polar residues. Residues 160–334 (ADVGLLGMPN…LCYSLQDYLD (175 aa)) form the OBG-type G domain. GTP contacts are provided by residues 166–173 (GMPNAGKS), 191–195 (FTTLH), 213–216 (DIPG), 284–287 (NKVD), and 315–317 (SAL). Positions 173 and 193 each coordinate Mg(2+).

It belongs to the TRAFAC class OBG-HflX-like GTPase superfamily. OBG GTPase family. In terms of assembly, monomer. Requires Mg(2+) as cofactor.

It is found in the cytoplasm. Its function is as follows. An essential GTPase which binds GTP, GDP and possibly (p)ppGpp with moderate affinity, with high nucleotide exchange rates and a fairly low GTP hydrolysis rate. Plays a role in control of the cell cycle, stress response, ribosome biogenesis and in those bacteria that undergo differentiation, in morphogenesis control. The chain is GTPase Obg from Polynucleobacter necessarius subsp. necessarius (strain STIR1).